The following is a 289-amino-acid chain: Serine/threonine-protein phosphatase Pgam5, mitochondrial (289 aa).

The helical transmembrane segment at 7 to 23 threads the bilayer; it reads FACGTGAGLAAYYLQRL.

The protein belongs to the phosphoglycerate mutase family. BPG-dependent PGAM subfamily. Interacts with Pk92B/ASK1.

The protein resides in the mitochondrion outer membrane. The enzyme catalyses O-phospho-L-seryl-[protein] + H2O = L-seryl-[protein] + phosphate. The catalysed reaction is O-phospho-L-threonyl-[protein] + H2O = L-threonyl-[protein] + phosphate. In terms of biological role, displays phosphatase activity for serine/threonine residues, and dephosphorylates and activates Pk92B kinase. Has apparently no phosphoglycerate mutase activity. This is Serine/threonine-protein phosphatase Pgam5, mitochondrial from Drosophila sechellia (Fruit fly).